We begin with the raw amino-acid sequence, 482 residues long: Probable cytosol aminopeptidase (482 aa).

Mn(2+) is bound by residues Lys251 and Asp256. The active site involves Lys263. 3 residues coordinate Mn(2+): Asp274, Asp333, and Glu335. Arg337 is an active-site residue.

This sequence belongs to the peptidase M17 family. The cofactor is Mn(2+).

It is found in the cytoplasm. The catalysed reaction is Release of an N-terminal amino acid, Xaa-|-Yaa-, in which Xaa is preferably Leu, but may be other amino acids including Pro although not Arg or Lys, and Yaa may be Pro. Amino acid amides and methyl esters are also readily hydrolyzed, but rates on arylamides are exceedingly low.. It catalyses the reaction Release of an N-terminal amino acid, preferentially leucine, but not glutamic or aspartic acids.. Its function is as follows. Presumably involved in the processing and regular turnover of intracellular proteins. Catalyzes the removal of unsubstituted N-terminal amino acids from various peptides. The protein is Probable cytosol aminopeptidase of Acinetobacter baumannii (strain SDF).